The sequence spans 104 residues: MVPVAYYLVLSAILFSIGVGAFLIKRNIITIFMSIELMLNAVNLSFVAFANYWRQINHQFSGQIFVFFVMVVAAAEAAVGLAIIIALFRSRSTLNVDQVDLMKL.

Transmembrane regions (helical) follow at residues 4 to 24 (VAYYLVLSAILFSIGVGAFLI), 28 to 48 (IITIFMSIELMLNAVNLSFVA), and 64 to 84 (IFVFFVMVVAAAEAAVGLAII).

The protein belongs to the complex I subunit 4L family. As to quaternary structure, NDH-1 is composed of 14 different subunits. Subunits NuoA, H, J, K, L, M, N constitute the membrane sector of the complex.

The protein localises to the cell inner membrane. The enzyme catalyses a quinone + NADH + 5 H(+)(in) = a quinol + NAD(+) + 4 H(+)(out). Functionally, NDH-1 shuttles electrons from NADH, via FMN and iron-sulfur (Fe-S) centers, to quinones in the respiratory chain. The immediate electron acceptor for the enzyme in this species is believed to be ubiquinone. Couples the redox reaction to proton translocation (for every two electrons transferred, four hydrogen ions are translocated across the cytoplasmic membrane), and thus conserves the redox energy in a proton gradient. The protein is NADH-quinone oxidoreductase subunit K of Acidobacterium capsulatum (strain ATCC 51196 / DSM 11244 / BCRC 80197 / JCM 7670 / NBRC 15755 / NCIMB 13165 / 161).